A 100-amino-acid chain; its full sequence is Urease subunit gamma (100 aa).

It belongs to the urease gamma subunit family. In terms of assembly, heterotrimer of UreA (gamma), UreB (beta) and UreC (alpha) subunits. Three heterotrimers associate to form the active enzyme.

It localises to the cytoplasm. It catalyses the reaction urea + 2 H2O + H(+) = hydrogencarbonate + 2 NH4(+). Its pathway is nitrogen metabolism; urea degradation; CO(2) and NH(3) from urea (urease route): step 1/1. In Azoarcus sp. (strain BH72), this protein is Urease subunit gamma.